A 772-amino-acid chain; its full sequence is Metal transporter CNNM4 (772 aa).

Over 1 to 175 the chain is Extracellular; the sequence is MAPGGGGGRR…SLLFMVEEHG (175 aa). N-linked (GlcNAc...) asparagine glycosylation is present at N120. The chain crosses the membrane as a helical span at residues 176 to 196; it reads RFLPLWLHILLVLVLLVLSGI. Positions 176 to 356 constitute a CNNM transmembrane domain; it reads RFLPLWLHIL…EPYNDLVKEE (181 aa). The Cytoplasmic segment spans residues 197–237; sequence FSGLNLGLMALDPMELRIVQNCGTEKERRYARKIEPIRRKG. Positions 238-258 form an intramembrane region, helical; that stretch reads NYLLCSLLLGNVLVNTSLTIL. Over 259–261 the chain is Cytoplasmic; it reads LDN. The helical transmembrane segment at 262 to 282 threads the bilayer; it reads LIGSGIMAVASSTIGIVIFGE. The Extracellular portion of the chain corresponds to 283-290; sequence ILPQALCS. Residues 291 to 313 traverse the membrane as a helical segment; it reads RHGLAVGANTIVLTKIFMLLTFP. The Cytoplasmic portion of the chain corresponds to 314–772; the sequence is LSFPISKLLD…LHRASQEGTI (459 aa). 2 CBS domains span residues 375–436 and 443–509; these read MTQL…CTPL and YNHP…ILDE. The disordered stretch occupies residues 647 to 676; that stretch reads PDRSPAHPTPLSRSASLSYPDRNTDMTPSS. Residues S658, S662, and S767 each carry the phosphoserine modification.

This sequence belongs to the ACDP family. As to quaternary structure, interacts with COX11. Present in spinal cord dorsal horn neurons and in developing teeth (at protein level). In the tooth, higher expression is found in the ameloblasts during the transition and maturation phases of amelogenesis; reduced expression in the odontoblasts.

Its subcellular location is the cell membrane. Functionally, probable metal transporter. The interaction with the metal ion chaperone COX11 suggests that it may play a role in sensory neuron functions. May play a role in biomineralization and retinal function. The chain is Metal transporter CNNM4 (Cnnm4) from Rattus norvegicus (Rat).